Here is a 359-residue protein sequence, read N- to C-terminus: Malonyl-CoA reductase (359 aa).

An NADP(+)-binding site is contributed by 16–19 (TGLV). The Acyl-thioester intermediate role is filled by C153. 183 to 184 (SG) serves as a coordination point for NADP(+). The active-site Proton acceptor is the H248. Position 335–336 (335–336 (NT)) interacts with NADP(+).

It belongs to the aspartate-semialdehyde dehydrogenase family. As to quaternary structure, homodimer and possibly a tetramer. Mg(2+) serves as cofactor. Requires Mn(2+) as cofactor.

The enzyme catalyses 3-oxopropanoate + NADP(+) + CoA = malonyl-CoA + NADPH + H(+). Activated by dithioerythritol (5 mM) and inhibited by the thiol-blocking agent iodoacetamide (0.1 mM). In terms of biological role, catalyzes the reduction of malonyl-CoA to malonate semialdehyde, a key step in the 3-hydroxypropanoate and the 3-hydroxypropanoate/4-hydroxybutyrate cycles. Can also use succinyl-CoA and succinate semialdehyde as substrates but at a lower rate than malonyl-CoA. In Sulfurisphaera tokodaii (strain DSM 16993 / JCM 10545 / NBRC 100140 / 7) (Sulfolobus tokodaii), this protein is Malonyl-CoA reductase (mcr).